Consider the following 84-residue polypeptide: uncharacterized protein (84 aa).

The region spanning 2 to 84 (ARVTLRITGT…RAKGDIEIEM (83 aa)) is the 2Fe-2S ferredoxin-type domain. The [2Fe-2S] cluster site is built by Cys-37, Cys-42, Cys-45, and Cys-74.

Requires [2Fe-2S] cluster as cofactor.

This is an uncharacterized protein from Escherichia coli O6:H1 (strain CFT073 / ATCC 700928 / UPEC).